Consider the following 514-residue polypeptide: MRCSDLLLLFLLALCVLPGISCRNQEEKLLQDLMTNYNRHLRPALRGDQVIDVTLKLTLTNLISLNEREETLTTNVWIEMQWSDYRLRWDPDKYDDIQQLRVPSAMVWLPDIVLENNIDGTFEITLYTNVLVYPDGSIYWLPPAIYRSSCSIHVTYFPFDWQNCTMVFQSQTYSANEINLLLTVEEGQTIEWIFIDPEAFTENGEWAIKHRPARKIINSGRFTPDDIQYQQVIFYLIIQRKPLFYIINIIVPCVLISSMAVLVYFLPAKAGGQKCTVSINVLLAQTVFLFLIAQKVPETSQAVPLIGKYLTFLMVVTVVIVVNAVIVLNVSLRTPNTHSMSQRVRQVWLHLLPRYLGMHMPEEAPGPPQATRRRSSLGLMVKADEYMLWKARTELLFEKQKERDGLMKTVLEKIGRGLESNCAQDFCQSLEEASPEIRACVEACNHIANATREQNDFSSENEEWILVGRVIDRVCFFIMASLFVCGTIGIFLMAHFNQAPALPFPGDPKTYLPP.

Residues 1–22 (MRCSDLLLLFLLALCVLPGISC) form the signal peptide. Residues 23–241 (RNQEEKLLQD…VIFYLIIQRK (219 aa)) are Extracellular-facing. An intrachain disulfide couples Cys150 to Cys164. An N-linked (GlcNAc...) asparagine glycan is attached at Asn163. The next 3 helical transmembrane spans lie at 242–266 (PLFY…VYFL), 275–293 (CTVS…FLIA), and 309–330 (YLTF…VLNV). Residues 331–473 (SLRTPNTHSM…WILVGRVIDR (143 aa)) lie on the Cytoplasmic side of the membrane. A Phosphotyrosine; by Tyr-kinases modification is found at Tyr386. The helical transmembrane segment at 474–494 (VCFFIMASLFVCGTIGIFLMA) threads the bilayer.

This sequence belongs to the ligand-gated ion channel (TC 1.A.9) family. Acetylcholine receptor (TC 1.A.9.1) subfamily. Gamma/CHRNG sub-subfamily. In terms of assembly, pentamer of two alpha chains, and one each of the beta, delta, and gamma chains.

It localises to the postsynaptic cell membrane. The protein resides in the cell membrane. It carries out the reaction K(+)(in) = K(+)(out). The enzyme catalyses Na(+)(in) = Na(+)(out). Its function is as follows. After binding acetylcholine, the AChR responds by an extensive change in conformation that affects all subunits and leads to opening of an ion-conducting channel across the plasma membrane. The sequence is that of Acetylcholine receptor subunit gamma (CHRNG) from Gallus gallus (Chicken).